The sequence spans 256 residues: F-actin-capping protein subunit alpha (256 aa).

Phosphoserine is present on S31.

It belongs to the F-actin-capping protein alpha subunit family. In terms of assembly, component of the F-actin capping complex, composed of a heterodimer of an alpha and a beta subunit.

Its subcellular location is the cytoplasm. It is found in the cytoskeleton. The protein resides in the actin patch. Its function is as follows. F-actin-capping proteins bind in a Ca(2+)-independent manner to the fast growing ends of actin filaments (barbed end) thereby blocking the exchange of subunits at these ends. Unlike other capping proteins (such as gelsolin and severin), these proteins do not sever actin filaments. Competes with formin cdc12 for attachment to the actin filaments barbed ends. Slowly replaces cdc12 on the barbed ends in preparation for filament disassembly during contractile ring constriction. The protein is F-actin-capping protein subunit alpha (acp1) of Schizosaccharomyces pombe (strain 972 / ATCC 24843) (Fission yeast).